We begin with the raw amino-acid sequence, 290 residues long: Small ribosomal subunit biogenesis GTPase RsgA (290 aa).

Positions 63 to 220 (KNELIRPPIA…IADTPGFSNL (158 aa)) constitute a CP-type G domain. Residues 112–115 (NKFD) and 162–170 (GPSGVGKST) each bind GTP. Positions 244, 249, 251, and 257 each coordinate Zn(2+).

This sequence belongs to the TRAFAC class YlqF/YawG GTPase family. RsgA subfamily. As to quaternary structure, monomer. Associates with 30S ribosomal subunit, binds 16S rRNA. Zn(2+) serves as cofactor.

It is found in the cytoplasm. Functionally, one of several proteins that assist in the late maturation steps of the functional core of the 30S ribosomal subunit. Helps release RbfA from mature subunits. May play a role in the assembly of ribosomal proteins into the subunit. Circularly permuted GTPase that catalyzes slow GTP hydrolysis, GTPase activity is stimulated by the 30S ribosomal subunit. The sequence is that of Small ribosomal subunit biogenesis GTPase RsgA from Carboxydothermus hydrogenoformans (strain ATCC BAA-161 / DSM 6008 / Z-2901).